The primary structure comprises 121 residues: Large ribosomal subunit protein bL21c (121 aa).

Belongs to the bacterial ribosomal protein bL21 family. As to quaternary structure, part of the 50S ribosomal subunit.

The protein localises to the plastid. It is found in the chloroplast. In terms of biological role, this protein binds to 23S rRNA. This Chaetosphaeridium globosum (Charophycean green alga) protein is Large ribosomal subunit protein bL21c.